Reading from the N-terminus, the 67-residue chain is Conotoxin LeDr192 (67 aa).

The first 19 residues, 1–19 (MRCFPVFIILLLLIASAPC), serve as a signal peptide directing secretion. Positions 20–49 (FDARTKTDDDVPLSPLRDNLKRTIRTRLNI) are excised as a propeptide. Threonine 65 bears the Threonine amide mark.

It belongs to the conotoxin T superfamily. In terms of processing, contains 2 disulfide bonds that can be either 'C1-C3, C2-C4' or 'C1-C4, C2-C3', since these disulfide connectivities have been observed for conotoxins with cysteine framework V (for examples, see AC P0DQQ7 and AC P81755). As to expression, expressed by the venom duct.

It localises to the secreted. This Conus litteratus (Lettered cone) protein is Conotoxin LeDr192.